The chain runs to 410 residues: Gamma-glutamyl phosphate reductase (410 aa).

The protein belongs to the gamma-glutamyl phosphate reductase family.

Its subcellular location is the cytoplasm. It carries out the reaction L-glutamate 5-semialdehyde + phosphate + NADP(+) = L-glutamyl 5-phosphate + NADPH + H(+). Its pathway is amino-acid biosynthesis; L-proline biosynthesis; L-glutamate 5-semialdehyde from L-glutamate: step 2/2. Its function is as follows. Catalyzes the NADPH-dependent reduction of L-glutamate 5-phosphate into L-glutamate 5-semialdehyde and phosphate. The product spontaneously undergoes cyclization to form 1-pyrroline-5-carboxylate. The chain is Gamma-glutamyl phosphate reductase from Sulfurovum sp. (strain NBC37-1).